A 358-amino-acid polypeptide reads, in one-letter code: Protein RecA 2 (358 aa).

69 to 76 (GPESSGKT) lines the ATP pocket. The interval 331–358 (GIGKSGAPSPRRRTSPRRPKVAARSAAV) is disordered. Positions 340 to 351 (PRRRTSPRRPKV) are enriched in basic residues.

Belongs to the RecA family.

The protein resides in the cytoplasm. Its function is as follows. Can catalyze the hydrolysis of ATP in the presence of single-stranded DNA, the ATP-dependent uptake of single-stranded DNA by duplex DNA, and the ATP-dependent hybridization of homologous single-stranded DNAs. It interacts with LexA causing its activation and leading to its autocatalytic cleavage. The polypeptide is Protein RecA 2 (Myxococcus xanthus).